A 103-amino-acid polypeptide reads, in one-letter code: Large ribosomal subunit protein bL21 (103 aa).

It belongs to the bacterial ribosomal protein bL21 family. Part of the 50S ribosomal subunit. Contacts protein L20.

In terms of biological role, this protein binds to 23S rRNA in the presence of protein L20. The protein is Large ribosomal subunit protein bL21 of Vibrio atlanticus (strain LGP32) (Vibrio splendidus (strain Mel32)).